The chain runs to 514 residues: Pleiotropic regulator 1 (514 aa).

At Met-1 the chain carries N-acetylmethionine. Phosphoserine is present on Ser-119. Residues 135–160 form a disordered region; it reads KADANRTAPSGSEYRHPGASDRPQPT. Phosphoserine is present on Ser-201. 7 WD repeats span residues 202–241, 244–283, 286–325, 328–367, 370–410, 411–449, and 460–499; these read GHLG…LKLS, GHIS…VIRH, GHLS…SVHT, GHTN…TRVT, NHKK…QNLS, GHNA…NFQR, and DSES…TEET. Residue Ser-391 is modified to Phosphoserine.

The protein belongs to the WD repeat PRL1/PRL2 family. In terms of assembly, identified in the spliceosome C complex. Component of the PRP19-CDC5L splicing complex composed of a core complex comprising a homotetramer of PRPF19, CDC5L, PLRG1 and BCAS2, and at least three less stably associated proteins CTNNBL1, CWC15 and HSPA8. Interacts (via its WD40 repeat domain) directly with CDC5L (via its C-terminal); the interaction is required for mRNA splicing but not for spliceosome assembly. Component of the minor spliceosome, which splices U12-type introns. Within this complex, interacts with CRIPT. Also interacts directly in the complex with BCAS2 and PRPF19. Interacts with USB1.

The protein resides in the nucleus. The protein localises to the nucleus speckle. In terms of biological role, involved in pre-mRNA splicing as component of the spliceosome. Component of the PRP19-CDC5L complex that forms an integral part of the spliceosome and is required for activating pre-mRNA splicing. As a component of the minor spliceosome, involved in the splicing of U12-type introns in pre-mRNAs. The polypeptide is Pleiotropic regulator 1 (PLRG1) (Homo sapiens (Human)).